A 494-amino-acid chain; its full sequence is UDP-glucose 6-dehydrogenase (494 aa).

NAD(+) contacts are provided by residues 11 to 16 (GAGYVG), Asp36, Arg41, and 89 to 93 (VNTPT). The interval 88–110 (SVNTPTKTYGMGKGRAADLKYIE) is disordered. Lys107 bears the N6-acetyllysine mark. The segment at 129–135 (KSTVPVR) is allosteric switch region. NAD(+) is bound at residue 130–132 (STV). Catalysis depends on Glu161, which acts as the Proton donor/acceptor. Substrate is bound by residues 161-165 (EFLAE), 220-224 (KLTAN), Arg260, and 267-273 (KASVGFG). Glu165 contacts NAD(+). Lys220 acts as the Proton donor/acceptor in catalysis. The active-site Nucleophile is Cys276. 276–279 (CFQK) serves as a coordination point for NAD(+). Positions 321 to 325 (SLFNT) are important for formation of active hexamer structure. 338-339 (FK) contributes to the substrate binding site. Arg346 serves as a coordination point for NAD(+). Position 442 (Arg442) interacts with substrate. The segment at 466-494 (VSSKRIPYAPSGEIPKFSLQDMPNKKPRV) is disordered. Phosphoserine is present on Ser476.

This sequence belongs to the UDP-glucose/GDP-mannose dehydrogenase family. In terms of assembly, homohexamer.

The enzyme catalyses UDP-alpha-D-glucose + 2 NAD(+) + H2O = UDP-alpha-D-glucuronate + 2 NADH + 3 H(+). It functions in the pathway nucleotide-sugar biosynthesis; UDP-alpha-D-glucuronate biosynthesis; UDP-alpha-D-glucuronate from UDP-alpha-D-glucose: step 1/1. Its activity is regulated as follows. UDP-alpha-D-xylose (UDX) acts as a feedback inhibitor. It binds at the same site as the substrate, but functions as allosteric inhibitor by triggering a conformation change that disrupts the active hexameric ring structure and gives rise to an inactive, horseshoe-shaped hexamer. In terms of biological role, catalyzes the formation of UDP-alpha-D-glucuronate, a constituent of complex glycosaminoglycans. Required for the biosynthesis of chondroitin sulfate and heparan sulfate. Required for embryonic development via its role in the biosynthesis of glycosaminoglycans. Required for proper brain and neuronal development. This Bos taurus (Bovine) protein is UDP-glucose 6-dehydrogenase (UGDH).